The primary structure comprises 119 residues: C-C motif chemokine 24 (119 aa).

The first 26 residues, Met-1–Ser-26, serve as a signal peptide directing secretion. 2 disulfide bridges follow: Cys-33/Cys-58 and Cys-34/Cys-74. 2 N-linked (GlcNAc...) asparagine glycosylation sites follow: Asn-54 and Asn-115. The disordered stretch occupies residues Pro-96–Val-119. A compositionally biased stretch (basic residues) spans Lys-101–Val-119.

It belongs to the intercrine beta (chemokine CC) family. In terms of tissue distribution, highest expression in jejunum and spleen. Lower levels found in liver and lung. No expression detected in kidney, thymus, brain or testis.

It localises to the secreted. Functionally, chemotactic for resting T-lymphocytes, and eosinophils. Has lower chemotactic activity for neutrophils but none for monocytes and activated lymphocytes. Is a strong suppressor of colony formation by a multipotential hematopoietic progenitor cell line. Binds to CCR3. This is C-C motif chemokine 24 from Mus musculus (Mouse).